We begin with the raw amino-acid sequence, 307 residues long: Elongation factor Ts (307 aa).

The segment at 80–83 (TDFV) is involved in Mg(2+) ion dislocation from EF-Tu.

The protein belongs to the EF-Ts family.

It is found in the cytoplasm. In terms of biological role, associates with the EF-Tu.GDP complex and induces the exchange of GDP to GTP. It remains bound to the aminoacyl-tRNA.EF-Tu.GTP complex up to the GTP hydrolysis stage on the ribosome. The chain is Elongation factor Ts from Methylobacterium sp. (strain 4-46).